The chain runs to 175 residues: ATP synthase subunit b, chloroplastic (175 aa).

Residues 22 to 42 (VFETNIINLAAVVGIVVSFVG) traverse the membrane as a helical segment.

It belongs to the ATPase B chain family. F-type ATPases have 2 components, F(1) - the catalytic core - and F(0) - the membrane proton channel. F(1) has five subunits: alpha(3), beta(3), gamma(1), delta(1), epsilon(1). F(0) has four main subunits: a(1), b(1), b'(1) and c(10-14). The alpha and beta chains form an alternating ring which encloses part of the gamma chain. F(1) is attached to F(0) by a central stalk formed by the gamma and epsilon chains, while a peripheral stalk is formed by the delta, b and b' chains.

The protein localises to the plastid. It is found in the chloroplast thylakoid membrane. F(1)F(0) ATP synthase produces ATP from ADP in the presence of a proton or sodium gradient. F-type ATPases consist of two structural domains, F(1) containing the extramembraneous catalytic core and F(0) containing the membrane proton channel, linked together by a central stalk and a peripheral stalk. During catalysis, ATP synthesis in the catalytic domain of F(1) is coupled via a rotary mechanism of the central stalk subunits to proton translocation. Functionally, component of the F(0) channel, it forms part of the peripheral stalk, linking F(1) to F(0). The polypeptide is ATP synthase subunit b, chloroplastic (Chlamydomonas reinhardtii (Chlamydomonas smithii)).